The chain runs to 180 residues: ATP-dependent protease subunit HslV (180 aa).

Residue T6 is part of the active site. The Na(+) site is built by A164, C167, and T170.

The protein belongs to the peptidase T1B family. HslV subfamily. As to quaternary structure, a double ring-shaped homohexamer of HslV is capped on each side by a ring-shaped HslU homohexamer. The assembly of the HslU/HslV complex is dependent on binding of ATP.

It is found in the cytoplasm. The enzyme catalyses ATP-dependent cleavage of peptide bonds with broad specificity.. With respect to regulation, allosterically activated by HslU binding. Protease subunit of a proteasome-like degradation complex believed to be a general protein degrading machinery. This Borrelia hermsii (strain HS1 / DAH) protein is ATP-dependent protease subunit HslV.